A 166-amino-acid polypeptide reads, in one-letter code: 6,7-dimethyl-8-ribityllumazine synthase (166 aa).

Residues Phe22, 56–58 (SME), and 80–82 (AVI) each bind 5-amino-6-(D-ribitylamino)uracil. Residue 85–86 (ET) coordinates (2S)-2-hydroxy-3-oxobutyl phosphate. His88 acts as the Proton donor in catalysis. Phe113 serves as a coordination point for 5-amino-6-(D-ribitylamino)uracil. Arg127 lines the (2S)-2-hydroxy-3-oxobutyl phosphate pocket.

It belongs to the DMRL synthase family.

It carries out the reaction (2S)-2-hydroxy-3-oxobutyl phosphate + 5-amino-6-(D-ribitylamino)uracil = 6,7-dimethyl-8-(1-D-ribityl)lumazine + phosphate + 2 H2O + H(+). Its pathway is cofactor biosynthesis; riboflavin biosynthesis; riboflavin from 2-hydroxy-3-oxobutyl phosphate and 5-amino-6-(D-ribitylamino)uracil: step 1/2. In terms of biological role, catalyzes the formation of 6,7-dimethyl-8-ribityllumazine by condensation of 5-amino-6-(D-ribitylamino)uracil with 3,4-dihydroxy-2-butanone 4-phosphate. This is the penultimate step in the biosynthesis of riboflavin. This is 6,7-dimethyl-8-ribityllumazine synthase from Thermotoga neapolitana (strain ATCC 49049 / DSM 4359 / NBRC 107923 / NS-E).